We begin with the raw amino-acid sequence, 616 residues long: Cytochrome c oxidase subunit 1 (616 aa).

A helical membrane pass occupies residues 28 to 48 (HLYLISGGFFFLLGGLEALFI). His-72 lines the Fe(II)-heme a pocket. 6 consecutive transmembrane segments (helical) span residues 75–95 (TMIFLAAMPLVFAFMNAVVPL), 102–122 (VAFPFLNALGFWMFFFGGLFL), 158–178 (GLQISGFGTIMGAINFLVTII), 198–218 (FVTSALILFAFPPLTVGLIFM), 243–263 (LFWVFGHPEVYILVLPAFGIF), and 275–295 (LFGYSSMVFATVLIAFLGFMV). 2 residues coordinate Cu cation: His-249 and Tyr-253. The segment at residues 249-253 (HPEVY) is a cross-link (1'-histidyl-3'-tyrosine (His-Tyr)). Positions 298 and 299 each coordinate Cu cation. 7 helical membrane-spanning segments follow: residues 303 to 323 (VGMGPIANAIFAVATMTIAVP), 349 to 369 (AVAFIPSFVMGGVTGVMLASA), 380 to 400 (FVVAHFHYVIVGGVVFALLAG), 420 to 440 (ITFWLFFIGFHLTFFIQHFLG), 463 to 483 (ISTIGAFFIAAATVILLINIV), 553 to 573 (SSFLPFVIAFGLFVAAFGFTY), and 577 to 597 (AGWGLPVAILGLLITLGSMFL). Residue His-384 coordinates Fe(II)-heme o. His-384 is a heme a3 binding site. Fe(II)-heme a is bound at residue His-386.

This sequence belongs to the heme-copper respiratory oxidase family. Cu(2+) is required as a cofactor. Heme serves as cofactor.

It is found in the cell membrane. It catalyses the reaction 4 Fe(II)-[cytochrome c] + O2 + 8 H(+)(in) = 4 Fe(III)-[cytochrome c] + 2 H2O + 4 H(+)(out). It participates in energy metabolism; oxidative phosphorylation. Its function is as follows. Cytochrome c oxidase is the component of the respiratory chain that catalyzes the reduction of oxygen to water. Subunits 1-3 form the functional core of the enzyme complex. Co I is the catalytic subunit of the enzyme. Electrons originating in cytochrome c are transferred via the copper A center of subunit 2 and heme a of subunit 1 to the bimetallic center formed by heme a3 and copper B. This cytochrome c oxidase shows proton pump activity across the membrane in addition to the electron transfer. The sequence is that of Cytochrome c oxidase subunit 1 (ctaD) from Bacillus sp. (strain PS3).